Consider the following 1131-residue polypeptide: DNA-directed RNA polymerase subunit beta (1131 aa).

The tract at residues Gln1108–Glu1131 is disordered. Residues Leu1122–Glu1131 are compositionally biased toward basic and acidic residues.

The protein belongs to the RNA polymerase beta chain family. In cyanobacteria the RNAP catalytic core is composed of 2 alpha, 1 beta, 1 beta', 1 gamma and 1 omega subunit. When a sigma factor is associated with the core the holoenzyme is formed, which can initiate transcription.

It catalyses the reaction RNA(n) + a ribonucleoside 5'-triphosphate = RNA(n+1) + diphosphate. In terms of biological role, DNA-dependent RNA polymerase catalyzes the transcription of DNA into RNA using the four ribonucleoside triphosphates as substrates. In Nostoc sp. (strain PCC 7120 / SAG 25.82 / UTEX 2576), this protein is DNA-directed RNA polymerase subunit beta.